The primary structure comprises 228 residues: UPF0758 protein SAB1521c (228 aa).

The region spanning 102–224 is the MPN domain; it reads KITQPSDVAD…FTSLVEAGYF (123 aa). Residues H173, H175, and D186 each coordinate Zn(2+). Residues 173–186 carry the JAMM motif motif; sequence HNHPSGDVTPSQED.

It belongs to the UPF0758 family.

The polypeptide is UPF0758 protein SAB1521c (Staphylococcus aureus (strain bovine RF122 / ET3-1)).